Here is a 350-residue protein sequence, read N- to C-terminus: UDP-rhamnose/UDP-galactose transporter 3 (350 aa).

10 consecutive transmembrane segments (helical) span residues 12-32 (AVSDMGAWAMNVISSVGIIMA), 41-61 (GFAFSFATTLTGFHFALTALV), 81-101 (LIWFSIVANVSIAAMNFSLML), 104-124 (VGFYQISKLSMIPVVCVMEWI), 133-153 (EVKISVVVVVVGVGICTVTDV), 160-180 (FICACVAIFSSSLQQILIGSL), 200-220 (AFSLLVVGPLVDYLLSGKFIM), 224-244 (MSSGCFLFILLSCGLAVFCNI), 257-277 (SFQVIGHMKTVCILTLGWLLF), and 286-306 (VAGMIVAIVGMVIYSWAMELE).

The protein belongs to the TPT transporter family. TPT (TC 2.A.7.9) subfamily.

It localises to the golgi apparatus membrane. Functionally, nucleotide-sugar transporter that transports UDP-rhamnose or UDP-galactose and UMP in a strict counter-exchange mode. This Arabidopsis thaliana (Mouse-ear cress) protein is UDP-rhamnose/UDP-galactose transporter 3.